We begin with the raw amino-acid sequence, 290 residues long: MTVLLTGGTGRTAKHIAGIFRQTNVPFLVASRSSSAGTAENHRKFDWLDEETFPNALSVDQGMKPISVVWLCPPPLYDLATPVIKFIDFAVSQNVKKFVLLSASVIQKGGPAMGKIHEHLDSIKDVTYTVLRPTWFMENFSTKGEIQCEAIRRDSTVYSATENGKIPFISVVDIARVAACALTAETLKNSDHILQGPDLLTYDEVAQALTGVLGRKITHTKMTEGELAEKLMEEGVTPEEAYMHAAMDSMIKSGSEERVVSDEVKAWTGVKPRGFINFALSEKAAWRARK.

Belongs to the fgaFS/easG family. Monomer.

It carries out the reaction agroclavine + NADP(+) = didehydroagroclavine + NADPH + H(+). It functions in the pathway alkaloid biosynthesis; ergot alkaloid biosynthesis. Its function is as follows. Agroclavine dehydrogenase; part of the gene cluster that mediates the biosynthesis of fungal ergot alkaloid. DmaW catalyzes the first step of ergot alkaloid biosynthesis by condensing dimethylallyl diphosphate (DMAP) and tryptophan to form 4-dimethylallyl-L-tryptophan. The second step is catalyzed by the methyltransferase easF that methylates 4-dimethylallyl-L-tryptophan in the presence of S-adenosyl-L-methionine, resulting in the formation of 4-dimethylallyl-L-abrine. The catalase easC and the FAD-dependent oxidoreductase easE then transform 4-dimethylallyl-L-abrine to chanoclavine-I which is further oxidized by easD in the presence of NAD(+), resulting in the formation of chanoclavine-I aldehyde. Agroclavine dehydrogenase easG then mediates the conversion of chanoclavine-I aldehyde to agroclavine via a non-enzymatic adduct reaction: the substrate is an iminium intermediate that is formed spontaneously from chanoclavine-I aldehyde in the presence of glutathione. The presence of easA is not required to complete this reaction. Further conversion of agroclavine to paspalic acid is a two-step process involving oxidation of agroclavine to elymoclavine and of elymoclavine to paspalic acid, the second step being performed by the elymoclavine oxidase cloA. Paspalic acid is then further converted to D-lysergic acid. Ergopeptines are assembled from D-lysergic acid and three different amino acids by the D-lysergyl-peptide-synthetases composed each of a monomudular and a trimodular nonribosomal peptide synthetase subunit. LpsB and lpsC encode the monomodular subunits responsible for D-lysergic acid activation and incorporation into the ergopeptine backbone. LpsA1 and A2 subunits encode the trimodular nonribosomal peptide synthetase assembling the tripeptide portion of ergopeptines. LpsA1 is responsible for formation of the major ergopeptine, ergotamine, and lpsA2 for alpha-ergocryptine, the minor ergopeptine of the total alkaloid mixture elaborated by C.purpurea. D-lysergyl-tripeptides are assembled by the nonribosomal peptide synthetases and released as N-(D-lysergyl-aminoacyl)-lactams. Cyclolization of the D-lysergyl-tripeptides is performed by the Fe(2+)/2-ketoglutarate-dependent dioxygenase easH which introduces a hydroxyl group into N-(D-lysergyl-aminoacyl)-lactam at alpha-C of the aminoacyl residue followed by spontaneous condensation with the terminal lactam carbonyl group. This Claviceps purpurea (strain 20.1) (Ergot fungus) protein is Agroclavine dehydrogenase.